A 230-amino-acid chain; its full sequence is Ubiquitin carboxyl-terminal hydrolase isozyme L3 (230 aa).

The UCH catalytic domain occupies 5–229 (RWLPLEANPE…LRFNAIALSA (225 aa)). The interval 8–13 (PLEANP) is interaction with ubiquitin. C95 acts as the Nucleophile in catalysis. S130 is subject to Phosphoserine. Residues 152 to 159 (AHEGQTEA) form an interaction with ubiquitin. Crossover loop which restricts access of large ubiquitin adducts to the active site region. H169 (proton donor) is an active-site residue. The interaction with ubiquitin stretch occupies residues 219 to 224 (ELRFNA).

It belongs to the peptidase C12 family. Preferentially binds diubiquitin; the interaction does not hydrolyze diubiquitin but, in vitro, inhibits the hydrolyzing activity on other substrates. As to expression, highly expressed in heart, skeletal muscle, and testis.

It localises to the cytoplasm. It catalyses the reaction Thiol-dependent hydrolysis of ester, thioester, amide, peptide and isopeptide bonds formed by the C-terminal Gly of ubiquitin (a 76-residue protein attached to proteins as an intracellular targeting signal).. Its activity is regulated as follows. Inhibited by monoubiquitin and diubiquitin. In terms of biological role, deubiquitinating enzyme (DUB) that controls levels of cellular ubiquitin through processing of ubiquitin precursors and ubiquitinated proteins. Thiol protease that recognizes and hydrolyzes a peptide bond at the C-terminal glycine of either ubiquitin or NEDD8. Has a 10-fold preference for Arg and Lys at position P3'', and exhibits a preference towards 'Lys-48'-linked ubiquitin chains. Deubiquitinates ENAC in apical compartments, thereby regulating apical membrane recycling. Indirectly increases the phosphorylation of IGFIR, AKT and FOXO1 and promotes insulin-signaling and insulin-induced adipogenesis. Required for stress-response retinal, skeletal muscle and germ cell maintenance. May be involved in working memory. Can hydrolyze UBB(+1), a mutated form of ubiquitin which is not effectively degraded by the proteasome and is associated with neurogenerative disorders. The sequence is that of Ubiquitin carboxyl-terminal hydrolase isozyme L3 (UCHL3) from Homo sapiens (Human).